The primary structure comprises 463 residues: A-type ATP synthase subunit B (463 aa).

It belongs to the ATPase alpha/beta chains family. In terms of assembly, has multiple subunits with at least A(3), B(3), C, D, E, F, H, I and proteolipid K(x).

The protein localises to the cell membrane. Functionally, component of the A-type ATP synthase that produces ATP from ADP in the presence of a proton gradient across the membrane. The B chain is a regulatory subunit. In Saccharolobus islandicus (strain Y.N.15.51 / Yellowstone #2) (Sulfolobus islandicus), this protein is A-type ATP synthase subunit B.